Here is a 307-residue protein sequence, read N- to C-terminus: MFKRQLSTSVRYLQHYDESLLSRYYPESLLKSIKLAQQTIPEDTKFRVSRNVEFAPPYLDDFTKIHPFWDYKPGMPHLHAQEENNNFSIFRWDQVQQPLPGEGNILPPGVSLPNDGGRKSKSADVAAGLHKQTGVDPDYITRKLTMKPLVMKRVSNQTGKGKIASFYALVVVGDKNGMVGLGEGKSREEMSKAIFKAHWDAVRNLKEIPRYENRTIYGDIDFRYHGVKLHLRSAKPGFGLRVNHVIFEICECAGIKDLSGKVYKSRNDMNIAKGTIEAFTKAQKTLDEVALGRGKKLVDVRKVYYSS.

The transit peptide at 1–13 (MFKRQLSTSVRYL) directs the protein to the mitochondrion. Positions 144–208 (LTMKPLVMKR…WDAVRNLKEI (65 aa)) constitute an S5 DRBM domain.

The protein belongs to the universal ribosomal protein uS5 family. Component of the mitochondrial small ribosomal subunit (mt-SSU). Mature yeast 74S mitochondrial ribosomes consist of a small (37S) and a large (54S) subunit. The 37S small subunit contains a 15S ribosomal RNA (15S mt-rRNA) and 34 different proteins. The 54S large subunit contains a 21S rRNA (21S mt-rRNA) and 46 different proteins. uS3m, uS4m and uS5m form the narrow entry site of the mRNA channel.

It localises to the mitochondrion. Functionally, component of the mitochondrial ribosome (mitoribosome), a dedicated translation machinery responsible for the synthesis of mitochondrial genome-encoded proteins, including at least some of the essential transmembrane subunits of the mitochondrial respiratory chain. The mitoribosomes are attached to the mitochondrial inner membrane and translation products are cotranslationally integrated into the membrane. The protein is Small ribosomal subunit protein uS5m (MRPS5) of Saccharomyces cerevisiae (strain ATCC 204508 / S288c) (Baker's yeast).